The sequence spans 119 residues: Nascent polypeptide-associated complex protein (119 aa).

Positions 5 to 73 (RMNSREMRRL…MREVPKEPEE (69 aa)) constitute an NAC-A/B domain.

This sequence belongs to the NAC-alpha family. In terms of assembly, homodimer. Interacts with the ribosome. Binds ribosomal RNA.

Functionally, contacts the emerging nascent chain on the ribosome. The sequence is that of Nascent polypeptide-associated complex protein from Thermoplasma acidophilum (strain ATCC 25905 / DSM 1728 / JCM 9062 / NBRC 15155 / AMRC-C165).